The primary structure comprises 525 residues: Coronin-2A (525 aa).

5 WD repeats span residues 80–120, 130–170, 178–217, 220–263, and 269–308; these read GHRG…LTKN, GHAR…SVIM, CHQDVILSMSFNTNGSLLATACKDRKIRVLDPRAGTVLQE, YKGH…VPVT, and GSSGVLFPFYDADTNMLYVVGKGDRNIHYYEISANKPHLN. Residues 485–524 are a coiled coil; that stretch reads QMFYRQQDEIRRLRELVTQREVQAKQLELEIRNLRMNSPR.

Belongs to the WD repeat coronin family. In terms of assembly, binds actin. Component of the N-Cor repressor complex, at least composed of NCOR1, NCOR2, HDAC3, TBL1X, TBL1R, CORO2A and GPS2.

The protein is Coronin-2A (CORO2A) of Bos taurus (Bovine).